The chain runs to 198 residues: MVEKHLLEFLEKLQFLISKNVKISHYGIENVKKICGVDIAYKGNLGFSVGVSMDINSGDYNYKSYVGEVNFPYIPGFLFMREAPLMIKAIEGLDCHLLLVDGHGIAHPRKSGIATVIGVLLDFPTIGVAKSRLTGDLVNESEITYVYLNGEKVGVKFGRYFYSPGNKVDLQDCIELGKRGYPKVLKIADMLTKKIKKE.

The Mg(2+) site is built by Asp38 and Asp101.

The protein belongs to the endonuclease V family. Mg(2+) serves as cofactor.

The protein localises to the cytoplasm. It carries out the reaction Endonucleolytic cleavage at apurinic or apyrimidinic sites to products with a 5'-phosphate.. DNA repair enzyme involved in the repair of deaminated bases. Selectively cleaves double-stranded DNA at the second phosphodiester bond 3' to a deoxyinosine leaving behind the intact lesion on the nicked DNA. This Saccharolobus islandicus (strain Y.N.15.51 / Yellowstone #2) (Sulfolobus islandicus) protein is Endonuclease V.